The primary structure comprises 296 residues: Nucleotide-binding protein spr1424 (296 aa).

Position 13–20 (13–20) interacts with ATP; the sequence is GMGGAGKT. 63-66 provides a ligand contact to GTP; sequence DMRS.

Belongs to the RapZ-like family.

Its function is as follows. Displays ATPase and GTPase activities. The polypeptide is Nucleotide-binding protein spr1424 (Streptococcus pneumoniae (strain ATCC BAA-255 / R6)).